The sequence spans 144 residues: Large ribosomal subunit protein uL11 (144 aa).

It belongs to the universal ribosomal protein uL11 family. As to quaternary structure, part of the ribosomal stalk of the 50S ribosomal subunit. Interacts with L10 and the large rRNA to form the base of the stalk. L10 forms an elongated spine to which L12 dimers bind in a sequential fashion forming a multimeric L10(L12)X complex. In terms of processing, one or more lysine residues are methylated.

Its function is as follows. Forms part of the ribosomal stalk which helps the ribosome interact with GTP-bound translation factors. This Streptomyces sp. (strain FRI-5) protein is Large ribosomal subunit protein uL11.